The chain runs to 455 residues: Immunoglobulin alpha-2 heavy chain (455 aa).

Ig-like domains are found at residues 1-95 (EVQL…VYYC), 121-213 (PKVF…QDVT), 227-322 (PRLS…ANIT), and 330-432 (PEVH…KTID). Residues 1 to 115 (EVQLVETGGG…GKGTTVTVSS (115 aa)) are variable (V) domain, involved in antigen recognition. 2 cysteine pairs are disulfide-bonded: Cys22-Cys95 and Cys141-Cys200. The constant (C) domain stretch occupies residues 116-455 (ASPTSPKVFP…VMAEADGTCY (340 aa)). Asn162, Asn207, and Asn246 each carry an N-linked (GlcNAc...) asparagine glycan. 2 cysteine pairs are disulfide-bonded: Cys225/Cys282 and Cys249/Cys306. The N-linked (GlcNAc...) asparagine glycan is linked to Asn320. The cysteines at positions 352 and 415 are disulfide-linked. N-linked (GlcNAc...) asparagine glycosylation occurs at Asn442.

In terms of assembly, immunoglobulins are composed of two identical heavy chains and two identical light chains; disulfide-linked. Monomeric or polymeric.

The protein localises to the secreted. It localises to the cell membrane. In terms of biological role, immunoglobulins, also known as antibodies, are membrane-bound or secreted glycoproteins produced by B lymphocytes. In the recognition phase of humoral immunity, the membrane-bound immunoglobulins serve as receptors which, upon binding of a specific antigen, trigger the clonal expansion and differentiation of B lymphocytes into immunoglobulins-secreting plasma cells. Secreted immunoglobulins mediate the effector phase of humoral immunity, which results in the elimination of bound antigens. The antigen binding site is formed by the variable domain of one heavy chain, together with that of its associated light chain. Thus, each immunoglobulin has two antigen binding sites with remarkable affinity for a particular antigen. The variable domains are assembled by a process called V-(D)-J rearrangement and can then be subjected to somatic hypermutations which, after exposure to antigen and selection, allow affinity maturation for a particular antigen. Ig alpha is the major immunoglobulin class in body secretions. The protein is Immunoglobulin alpha-2 heavy chain of Homo sapiens (Human).